Reading from the N-terminus, the 374-residue chain is MLRWGGAGLARGLRAVRSAWLRGPRGLPLALVRSAGVPGARDRRAPAPGTQRGRALSLSAAAVVNSAPRPLQPYLRLMRLDKPIGTWLLYLPCTWSIGLAADPGCFPDWYMLSLFGTGAILMRGAGCTINDMWDRDFDKKVTRTANRPIAAGDISTFQSFVFLGGQLTLALGVLLCLNYYSIAMGAASLLLVVTYPLVKRITFWPQLALGLTFNWGALLGWSAVKGSCDPAVCLPLYFSGVMWTLIYDTIYAHQDKKDDALIGLKSTALLFQENTRQWLSGFGVAMVAALSLAGANNGQTVPYYAAVAAVGAHLAHQIYTVDIHRAEDCWDKFTSNRTVGMLLFLGIVLGNLCKEKTEEAKDAEAVRVGSEQTS.

A mitochondrion-targeting transit peptide spans 1–34 (MLRWGGAGLARGLRAVRSAWLRGPRGLPLALVRS). At 35 to 83 (AGVPGARDRRAPAPGTQRGRALSLSAAAVVNSAPRPLQPYLRLMRLDKP) the chain is on the mitochondrial matrix side. Residues 84 to 104 (IGTWLLYLPCTWSIGLAADPG) form a helical membrane-spanning segment. Residues 105–108 (CFPD) are Mitochondrial intermembrane-facing. The helical transmembrane segment at 109 to 129 (WYMLSLFGTGAILMRGAGCTI) threads the bilayer. Over 130 to 148 (NDMWDRDFDKKVTRTANRP) the chain is Mitochondrial matrix. Residues 149–169 (IAAGDISTFQSFVFLGGQLTL) form a helical membrane-spanning segment. The Mitochondrial intermembrane segment spans residues 170–172 (ALG). Residues 173 to 193 (VLLCLNYYSIAMGAASLLLVV) form a helical membrane-spanning segment. Residues 194–200 (TYPLVKR) are Mitochondrial matrix-facing. A helical membrane pass occupies residues 201–221 (ITFWPQLALGLTFNWGALLGW). Over 222–230 (SAVKGSCDP) the chain is Mitochondrial intermembrane. Residues 231–251 (AVCLPLYFSGVMWTLIYDTIY) form a helical membrane-spanning segment. Residues 252–277 (AHQDKKDDALIGLKSTALLFQENTRQ) are Mitochondrial matrix-facing. Residues 278–298 (WLSGFGVAMVAALSLAGANNG) traverse the membrane as a helical segment. Residues 299 to 332 (QTVPYYAAVAAVGAHLAHQIYTVDIHRAEDCWDK) are Mitochondrial intermembrane-facing. A helical transmembrane segment spans residues 333-353 (FTSNRTVGMLLFLGIVLGNLC). Over 354–374 (KEKTEEAKDAEAVRVGSEQTS) the chain is Mitochondrial matrix.

This sequence belongs to the UbiA prenyltransferase family. The cofactor is Mg(2+).

The protein localises to the mitochondrion inner membrane. It carries out the reaction an all-trans-polyprenyl diphosphate + 4-hydroxybenzoate = a 4-hydroxy-3-(all-trans-polyprenyl)benzoate + diphosphate. The enzyme catalyses all-trans-decaprenyl diphosphate + 4-hydroxybenzoate = 4-hydroxy-3-(all-trans-decaprenyl)benzoate + diphosphate. It catalyses the reaction all-trans-nonaprenyl diphosphate + 4-hydroxybenzoate = 4-hydroxy-3-(all-trans-nonaprenyl)benzoate + diphosphate. Its pathway is cofactor biosynthesis; ubiquinone biosynthesis. Mediates the second step in the final reaction sequence of coenzyme Q (CoQ) biosynthesis. Catalyzes the prenylation of para-hydroxybenzoate (PHB) with an all-trans polyprenyl donor (such as all-trans-nonaprenyl diphosphate). The length of the polyprenyl side chain varies depending on the species, in humans, the side chain is comprised of 10 isoprenyls producing CoQ10 (also known as ubiquinone), whereas rodents predominantly generate CoQ9. However, this specificity is not complete, human tissues have low amounts of CoQ9 and rodent organs contain some CoQ10. Plays a central role in the biosynthesis of CoQ9. CoQ9 is a vital molecule that transports electrons from mitochondrial respiratory chain complexes. CoQs also function as cofactors for uncoupling protein and play a role as regulators of the extracellularly-induced ceramide-dependent apoptotic pathway. Regulates mitochondrial permeability transition pore (mPTP) opening and ROS production (pivotal events in cell death) in a tissue specific manner. This is 4-hydroxybenzoate polyprenyltransferase, mitochondrial from Mus musculus (Mouse).